An 87-amino-acid polypeptide reads, in one-letter code: U3-theraphotoxin-Hhn1j (87 aa).

An N-terminal signal peptide occupies residues 1 to 24 (MVNMKASMFLTFAGLVLLFVVCYA). A propeptide spanning residues 25–52 (SESEEKEFPKEMLSSIFAVDNDFKQEER) is cleaved from the precursor. 3 disulfide bridges follow: Cys54–Cys67, Cys61–Cys72, and Cys66–Cys79.

The protein belongs to the neurotoxin 10 (Hwtx-1) family. 51 (Hntx-8) subfamily. Hntx-8 sub-subfamily. Expressed by the venom gland.

The protein localises to the secreted. In terms of biological role, ion channel inhibitor. The polypeptide is U3-theraphotoxin-Hhn1j (Cyriopagopus hainanus (Chinese bird spider)).